The following is a 125-amino-acid chain: Large ribosomal subunit protein bL17 (125 aa).

Belongs to the bacterial ribosomal protein bL17 family. As to quaternary structure, part of the 50S ribosomal subunit. Contacts protein L32.

The protein is Large ribosomal subunit protein bL17 of Acinetobacter baumannii (strain AB307-0294).